The primary structure comprises 378 residues: Anhydro-N-acetylmuramic acid kinase (378 aa).

9–16 (GTSVDGID) serves as a coordination point for ATP.

Belongs to the anhydro-N-acetylmuramic acid kinase family.

The catalysed reaction is 1,6-anhydro-N-acetyl-beta-muramate + ATP + H2O = N-acetyl-D-muramate 6-phosphate + ADP + H(+). It participates in amino-sugar metabolism; 1,6-anhydro-N-acetylmuramate degradation. Its pathway is cell wall biogenesis; peptidoglycan recycling. In terms of biological role, catalyzes the specific phosphorylation of 1,6-anhydro-N-acetylmuramic acid (anhMurNAc) with the simultaneous cleavage of the 1,6-anhydro ring, generating MurNAc-6-P. Is required for the utilization of anhMurNAc either imported from the medium or derived from its own cell wall murein, and thus plays a role in cell wall recycling. This Microcystis aeruginosa (strain NIES-843 / IAM M-2473) protein is Anhydro-N-acetylmuramic acid kinase.